A 186-amino-acid chain; its full sequence is MVKLAAKCILAGDPAVGKTALAQIFRSDGAHFQKSYTLTTGMDLVVKTVPVPDTGDSVELFIFDSAGKELFSEMLDKLWESPNVLCLVYDVTNEESFNNCSKWLEKARSQAPGISLPGVLVGNKTDLAGRRAVDSAEARAWALGQGLECFETSVKEMENFEAPFHCLAKQFHQLYREKVEVFRALA.

GTP is bound by residues 12-19 (GDPAVGKT), 64-68 (DSAGK), and 123-126 (NKTD).

Belongs to the small GTPase superfamily. Rab family. In terms of assembly, component of the IFT complex B, at least composed of IFT20, IFT25, IFT27, IFT52, IFT57, IFT74, IFT81, IFT88 and TRAF3IP1. Interacts with IFT25. Interacts with IFT70B. Interacts with RABL2/RABL2A; binding is equal in the presence of GTP or GDP. Interacts with ARL6; recognizes and binds with the GTP-free form of ARL6.

The protein resides in the cell projection. It localises to the cilium. Its subcellular location is the cytoplasm. The protein localises to the flagellum. Functionally, small GTPase-like component of the intraflagellar transport (IFT) complex B that promotes the exit of the BBSome complex from cilia via its interaction with ARL6. Not involved in entry of the BBSome complex into cilium. Prevents aggregation of GTP-free ARL6. Required for hedgehog signaling. Forms a subcomplex within the IFT complex B with IFT25. Its role in intraflagellar transport is mainly seen in tissues rich in ciliated cells such as kidney and testis. Essential for male fertility, spermiogenesis and sperm flagella formation. Plays a role in the early development of the kidney. May be involved in the regulation of ureteric bud initiation. The polypeptide is Intraflagellar transport protein 27 homolog (IFT27) (Homo sapiens (Human)).